The chain runs to 159 residues: Phosphopantetheine adenylyltransferase (159 aa).

Ser-9 is a binding site for substrate. Residues 9–10 (SF) and His-17 each bind ATP. Substrate contacts are provided by Lys-41, Leu-74, and Lys-88. ATP-binding positions include 89 to 91 (GLR), Glu-99, and 123 to 129 (YLHLSST).

It belongs to the bacterial CoaD family. Homohexamer. Mg(2+) serves as cofactor.

It localises to the cytoplasm. The enzyme catalyses (R)-4'-phosphopantetheine + ATP + H(+) = 3'-dephospho-CoA + diphosphate. Its pathway is cofactor biosynthesis; coenzyme A biosynthesis; CoA from (R)-pantothenate: step 4/5. Reversibly transfers an adenylyl group from ATP to 4'-phosphopantetheine, yielding dephospho-CoA (dPCoA) and pyrophosphate. The protein is Phosphopantetheine adenylyltransferase of Arthrobacter sp. (strain FB24).